Reading from the N-terminus, the 48-residue chain is Cuticle protein 6 isoform b (48 aa).

The polypeptide is Cuticle protein 6 isoform b (Limulus polyphemus (Atlantic horseshoe crab)).